The sequence spans 311 residues: Metal-staphylopine import system permease protein CntB (311 aa).

A run of 6 helical transmembrane segments spans residues 9 to 29 (IALMFPLMIVVSFMTFLLTYI), 105 to 125 (LTIISSVMVMITSIILGVVSA), 139 to 159 (VAFFLTALPSYWIASILIIYV), 173 to 193 (GPESYILPVIVITIAYAGIYF), 237 to 257 (IFCMSIPMIMGGLVVIEYIFA), and 274 to 294 (FPVIQAYVLIVAVLFIVFNTL). The ABC transmembrane type-1 domain maps to 99-295 (FMNTLKLTII…VLFIVFNTLA (197 aa)).

It belongs to the binding-protein-dependent transport system permease family. In terms of assembly, the complex is composed of two ATP-binding proteins (CntD and CntF), two transmembrane proteins (CntB and CntC) and a solute-binding protein (CntA).

The protein resides in the cell membrane. Its activity is regulated as follows. Nickel/cobalt import is reduced in the presence of zinc. In terms of biological role, part of the ABC transporter complex CntABCDF (Opp1) involved in the uptake of metal in complex with the metallophore staphylopine (StP). Involved in the import of divalent metals ions such as nickel, cobalt and zinc. Probably responsible for the translocation of the substrate across the membrane. Plays a major role in nickel/cobalt import in zinc-depleted conditions. Contributes to virulence. Required for full urease activity in vitro. This Staphylococcus aureus (strain NCTC 8325 / PS 47) protein is Metal-staphylopine import system permease protein CntB.